Reading from the N-terminus, the 105-residue chain is ATP synthase subunit c (105 aa).

The next 2 helical transmembrane spans lie at 37–57 (IGAGITMVGGATVGLGQGYIF) and 82–102 (SAISESSSIYSLLIAFILIFV).

The protein belongs to the ATPase C chain family. In terms of assembly, F-type ATPases have 2 components, F(1) - the catalytic core - and F(0) - the membrane proton channel. F(1) has five subunits: alpha(3), beta(3), gamma(1), delta(1), epsilon(1). F(0) has three main subunits: a(1), b(2) and c(10-14). The alpha and beta chains form an alternating ring which encloses part of the gamma chain. F(1) is attached to F(0) by a central stalk formed by the gamma and epsilon chains, while a peripheral stalk is formed by the delta and b chains.

It localises to the cell membrane. Its function is as follows. F(1)F(0) ATP synthase produces ATP from ADP in the presence of a proton or sodium gradient. F-type ATPases consist of two structural domains, F(1) containing the extramembraneous catalytic core and F(0) containing the membrane proton channel, linked together by a central stalk and a peripheral stalk. During catalysis, ATP synthesis in the catalytic domain of F(1) is coupled via a rotary mechanism of the central stalk subunits to proton translocation. In terms of biological role, key component of the F(0) channel; it plays a direct role in translocation across the membrane. A homomeric c-ring of between 10-14 subunits forms the central stalk rotor element with the F(1) delta and epsilon subunits. In Mycoplasma pneumoniae (strain ATCC 29342 / M129 / Subtype 1) (Mycoplasmoides pneumoniae), this protein is ATP synthase subunit c.